The chain runs to 91 residues: Signal recognition particle 19 kDa protein (91 aa).

The protein belongs to the SRP19 family. In terms of assembly, part of the signal recognition particle protein translocation system, which is composed of SRP and FtsY. Archaeal SRP consists of a 7S RNA molecule of 300 nucleotides and two protein subunits: SRP54 and SRP19.

It localises to the cytoplasm. Its function is as follows. Involved in targeting and insertion of nascent membrane proteins into the cytoplasmic membrane. Binds directly to 7S RNA and mediates binding of the 54 kDa subunit of the SRP. This chain is Signal recognition particle 19 kDa protein, found in Methanothermobacter thermautotrophicus (strain ATCC 29096 / DSM 1053 / JCM 10044 / NBRC 100330 / Delta H) (Methanobacterium thermoautotrophicum).